Here is a 293-residue protein sequence, read N- to C-terminus: Mitochondrial glycine transporter (293 aa).

Solcar repeat units follow at residues 6-85, 102-186, and 208-291; these read GGVP…SRSA, LQSY…AKEM, and ASAM…LLKL. 6 helical membrane-spanning segments follow: residues 12–37, 60–86, 108–133, 161–184, 212–238, and 266–284; these read LVSG…TRLQ, GTLP…RSAL, LLTG…VRYE, GAAA…EQAK, VNGV…KTRM, and GLSL…AWGI.

Belongs to the mitochondrial carrier (TC 2.A.29) family. SLC25A38 subfamily.

The protein localises to the mitochondrion inner membrane. It carries out the reaction glycine(in) = glycine(out). In terms of biological role, mitochondrial glycine transporter that imports glycine into the mitochondrial matrix. Plays an important role in providing glycine for the first enzymatic step in heme biosynthesis, the condensation of glycine with succinyl-CoA to produce 5-aminolevulinate (ALA) in the mitochondrial matrix. The chain is Mitochondrial glycine transporter from Eremothecium gossypii (strain ATCC 10895 / CBS 109.51 / FGSC 9923 / NRRL Y-1056) (Yeast).